Consider the following 207-residue polypeptide: MIOREX complex component 11 (207 aa).

The transit peptide at 1–46 (MTVMNLFFRPCQLQMGSGPLELMLKRPTQLTTFMNTRPGGSTQIRF) directs the protein to the mitochondrion. The Mitochondrial matrix segment spans residues 47–98 (ISGNLDPVKRREDRLRKIFSKSRLLTRLNKNPKFSHYFDRLSEAGTVPTLTS). Residues 99–119 (FFILHEVTAILPLFLLWWLLY) form a helical membrane-spanning segment. Residues 120 to 177 (NLDLSDDFKLPNFLNGLMDSCHTAMEKFVGKRYQECLNKNKLILSGTVAYVTVKLLYP) are Mitochondrial intermembrane-facing. Residues 178–198 (VRIFISIWGAPYFGKWLLLPF) form a helical membrane-spanning segment. Residues 199–207 (QKLKHLIKK) are Mitochondrial matrix-facing.

It belongs to the MRX11 family. Associates with the mitochondrial ribosome.

The protein localises to the mitochondrion. The protein resides in the mitochondrion inner membrane. Component of MIOREX complexes, large expressome-like assemblies of ribosomes with factors involved in all the steps of post-transcriptional gene expression. The polypeptide is MIOREX complex component 11 (Saccharomyces cerevisiae (strain ATCC 204508 / S288c) (Baker's yeast)).